A 111-amino-acid polypeptide reads, in one-letter code: Pyrimidine/purine nucleoside phosphorylase 1 (111 aa).

It belongs to the nucleoside phosphorylase PpnP family.

The enzyme catalyses a purine D-ribonucleoside + phosphate = a purine nucleobase + alpha-D-ribose 1-phosphate. The catalysed reaction is adenosine + phosphate = alpha-D-ribose 1-phosphate + adenine. It carries out the reaction cytidine + phosphate = cytosine + alpha-D-ribose 1-phosphate. It catalyses the reaction guanosine + phosphate = alpha-D-ribose 1-phosphate + guanine. The enzyme catalyses inosine + phosphate = alpha-D-ribose 1-phosphate + hypoxanthine. The catalysed reaction is thymidine + phosphate = 2-deoxy-alpha-D-ribose 1-phosphate + thymine. It carries out the reaction uridine + phosphate = alpha-D-ribose 1-phosphate + uracil. It catalyses the reaction xanthosine + phosphate = alpha-D-ribose 1-phosphate + xanthine. Functionally, catalyzes the phosphorolysis of diverse nucleosides, yielding D-ribose 1-phosphate and the respective free bases. Can use uridine, adenosine, guanosine, cytidine, thymidine, inosine and xanthosine as substrates. Also catalyzes the reverse reactions. The sequence is that of Pyrimidine/purine nucleoside phosphorylase 1 from Psychrobacter arcticus (strain DSM 17307 / VKM B-2377 / 273-4).